The primary structure comprises 162 residues: Beta-carotene hydroxylase (162 aa).

Positions 8 to 135 (VATVLVMELT…GRDHCVSFGF (128 aa)) constitute a Fatty acid hydroxylase domain.

The protein belongs to the sterol desaturase family.

It carries out the reaction all-trans-beta-carotene + 4 reduced [2Fe-2S]-[ferredoxin] + 2 O2 + 4 H(+) = all-trans-zeaxanthin + 4 oxidized [2Fe-2S]-[ferredoxin] + 2 H2O. It participates in carotenoid biosynthesis; astaxanthin biosynthesis. Its function is as follows. Catalyzes the hydroxylation reaction from beta-carotene to zeaxanthin via beta-cryptoxanthin. The chain is Beta-carotene hydroxylase (crtZ) from Paracoccus sp. (strain N81106 / MBIC 01143) (Agrobacterium aurantiacum).